We begin with the raw amino-acid sequence, 103 residues long: uncharacterized protein (103 aa).

Positions 1-22 (MFRPFLNSLMLGSLFFPFIAIA) are cleaved as a signal peptide.

It to the N-terminal of the FimA/PapA family of fimbria proteins.

This is an uncharacterized protein from Escherichia coli (strain K12).